We begin with the raw amino-acid sequence, 183 residues long: Lipid droplet coating protein mpl1 (183 aa).

It belongs to the perilipin family.

The protein resides in the lipid droplet. Its function is as follows. Lipid droplet coating protein that regulates lipid metabolism, appressorial turgor pressure, and virulence. Appressorial turgor pressure is important for breaching the insect cuticle during infection. This Metarhizium robertsii (strain ARSEF 23 / ATCC MYA-3075) (Metarhizium anisopliae (strain ARSEF 23)) protein is Lipid droplet coating protein mpl1.